The primary structure comprises 261 residues: Cytochrome c oxidase subunit 3 (261 aa).

Residues 1–15 (MAHQAHAYHMVDPSP) lie on the Mitochondrial matrix side of the membrane. A helical transmembrane segment spans residues 16–34 (WPLTGAIAALLLTSGTAVW). Topologically, residues 35 to 40 (FHFHSL) are mitochondrial intermembrane. Residues 41–66 (TLLTLGNVLLLLTMYQWWRDIIREGT) form a helical membrane-spanning segment. Residues 67–72 (FQGHHT) are Mitochondrial matrix-facing. The helical transmembrane segment at 73 to 105 (PPVQKGLRYGMILFITSEVFFFLGFFWAFYHAS) threads the bilayer. The Mitochondrial intermembrane segment spans residues 106–128 (LAPTPELGGCWPPTGITTLDPFE). Residues 129–152 (VPLLNTAVLLASGVTVTWAHHSIM) traverse the membrane as a helical segment. The Mitochondrial matrix segment spans residues 153–155 (EGE). A helical membrane pass occupies residues 156 to 183 (RKQTIQALTLTILLGFYFTFLQGMEYYE). At 184 to 190 (APFTIAD) the chain is on the mitochondrial intermembrane side. The chain crosses the membrane as a helical span at residues 191 to 223 (GVYGSTFFVATGFHGLHVIIGSTFLAVCLLRQV). Over 224–232 (QYHFTSEHH) the chain is Mitochondrial matrix. The chain crosses the membrane as a helical span at residues 233 to 256 (FGFEAAAWYWHFVDVVWLFLYVSI). Topologically, residues 257 to 261 (YWWGS) are mitochondrial intermembrane.

Belongs to the cytochrome c oxidase subunit 3 family. In terms of assembly, component of the cytochrome c oxidase (complex IV, CIV), a multisubunit enzyme composed of 14 subunits. The complex is composed of a catalytic core of 3 subunits MT-CO1, MT-CO2 and MT-CO3, encoded in the mitochondrial DNA, and 11 supernumerary subunits COX4I, COX5A, COX5B, COX6A, COX6B, COX6C, COX7A, COX7B, COX7C, COX8 and NDUFA4, which are encoded in the nuclear genome. The complex exists as a monomer or a dimer and forms supercomplexes (SCs) in the inner mitochondrial membrane with NADH-ubiquinone oxidoreductase (complex I, CI) and ubiquinol-cytochrome c oxidoreductase (cytochrome b-c1 complex, complex III, CIII), resulting in different assemblies (supercomplex SCI(1)III(2)IV(1) and megacomplex MCI(2)III(2)IV(2)).

Its subcellular location is the mitochondrion inner membrane. It carries out the reaction 4 Fe(II)-[cytochrome c] + O2 + 8 H(+)(in) = 4 Fe(III)-[cytochrome c] + 2 H2O + 4 H(+)(out). Component of the cytochrome c oxidase, the last enzyme in the mitochondrial electron transport chain which drives oxidative phosphorylation. The respiratory chain contains 3 multisubunit complexes succinate dehydrogenase (complex II, CII), ubiquinol-cytochrome c oxidoreductase (cytochrome b-c1 complex, complex III, CIII) and cytochrome c oxidase (complex IV, CIV), that cooperate to transfer electrons derived from NADH and succinate to molecular oxygen, creating an electrochemical gradient over the inner membrane that drives transmembrane transport and the ATP synthase. Cytochrome c oxidase is the component of the respiratory chain that catalyzes the reduction of oxygen to water. Electrons originating from reduced cytochrome c in the intermembrane space (IMS) are transferred via the dinuclear copper A center (CU(A)) of subunit 2 and heme A of subunit 1 to the active site in subunit 1, a binuclear center (BNC) formed by heme A3 and copper B (CU(B)). The BNC reduces molecular oxygen to 2 water molecules using 4 electrons from cytochrome c in the IMS and 4 protons from the mitochondrial matrix. The sequence is that of Cytochrome c oxidase subunit 3 (mt-co3) from Oncorhynchus masou (Cherry salmon).